The primary structure comprises 645 residues: Threonine--tRNA ligase (645 aa).

The region spanning 1–63 (MEQINIQFPD…ETDGSIEIVT (63 aa)) is the TGS domain. Residues 242 to 540 (DHRKIGKELE…LTEETKGAFP (299 aa)) are catalytic. 3 residues coordinate Zn(2+): C336, H387, and H517.

This sequence belongs to the class-II aminoacyl-tRNA synthetase family. In terms of assembly, homodimer. Requires Zn(2+) as cofactor.

It localises to the cytoplasm. The catalysed reaction is tRNA(Thr) + L-threonine + ATP = L-threonyl-tRNA(Thr) + AMP + diphosphate + H(+). In terms of biological role, catalyzes the attachment of threonine to tRNA(Thr) in a two-step reaction: L-threonine is first activated by ATP to form Thr-AMP and then transferred to the acceptor end of tRNA(Thr). Also edits incorrectly charged L-seryl-tRNA(Thr). The protein is Threonine--tRNA ligase of Staphylococcus aureus (strain bovine RF122 / ET3-1).